A 480-amino-acid polypeptide reads, in one-letter code: MTSKRLGARFPGFLNRIGSGITRAARSDTTKRIPSAAGRAVERVAASEIGQRAIAGVVEGAATAALTGESVGESVKRAVILNVAGVHQTVPDPLNPVEIETQAKLRELDLANKREEAQIRHNKSMLQKEAQILGEVQHLMTVQEHVDQAKYEVRSGRALQAAQAIVKGERQQLDRVTKALIRENEMRTTDERKLIEGMRHNYSALAKSVDADSALIEEAVEQTVDIGGEIAEHATASIPFVGEAVSAGMATARGAMQIYRLGKTIHAITGLHTNHCEIPAIHQGAIETLLTSDSPTSDASLAQITSSRVRHLREIESELAHLDAEVKPAMQQMCQDIAKLAPDHLKKRRGVIHMNAAHELRVPLKQRPMIHSYTSPWDSDYVLILHVVGPYHSGQAFVFCLDLALDQFHFEEDTGSKPPVPPPRHRAPADFSARPAPISLSPLLAILTQRGCIGPGWPRVLMIRPCISALYRTRPPTRRC.

Residues Met1 to Glu48 are involved in membrane permeabilization.

This sequence belongs to the orbivirus VP5 family.

The protein localises to the virion. In terms of biological role, VP5 protein is one of the two proteins (with VP2) which constitute the virus particle outer capsid. Acts as a membrane permeabilization protein that mediates release of viral particles from endosomal compartments into the cytoplasm. Permeabilization activity is probably negatively regulated by VP2 and is triggered by endosomal degradation of VP2 and exposure to low pH. This Ixodes (gulls) protein is Outer capsid protein VP5 (Segment-6).